Reading from the N-terminus, the 289-residue chain is Diaminopimelate epimerase (289 aa).

The substrate site is built by N11 and N78. C87 acts as the Proton donor in catalysis. Substrate contacts are provided by residues G88–N89, N163, N199, and E217–R218. Catalysis depends on C226, which acts as the Proton acceptor. Residue G227–T228 coordinates substrate.

Belongs to the diaminopimelate epimerase family. Homodimer.

The protein resides in the cytoplasm. The enzyme catalyses (2S,6S)-2,6-diaminopimelate = meso-2,6-diaminopimelate. It participates in amino-acid biosynthesis; L-lysine biosynthesis via DAP pathway; DL-2,6-diaminopimelate from LL-2,6-diaminopimelate: step 1/1. Catalyzes the stereoinversion of LL-2,6-diaminopimelate (L,L-DAP) to meso-diaminopimelate (meso-DAP), a precursor of L-lysine and an essential component of the bacterial peptidoglycan. In Rhodococcus jostii (strain RHA1), this protein is Diaminopimelate epimerase.